The chain runs to 419 residues: Aminoacyltransferase FemB (419 aa).

The protein belongs to the FemABX family. In terms of assembly, homodimer. Interacts with FemA.

It localises to the cytoplasm. It carries out the reaction MurNAc-L-Ala-D-isoglutaminyl-L-Lys-(N(6)-tri-Gly)-D-Ala-D-Ala-diphospho-di-trans,octa-cis-undecaprenyl-GlcNAc + 2 glycyl-tRNA(Gly) = MurNAc-L-Ala-D-isoglutaminyl-L-Lys-(N(6)-penta-Gly)-D-Ala-D-Ala-diphospho-di-trans,octa-cis-undecaprenyl-GlcNAc + 2 tRNA(Gly) + 2 H(+). Functionally, catalyzes the formation of the pentaglycine interpeptide bridge, which is characteristic of the S.aureus peptidoglycan. Adds glycines 4 and 5 of the pentaglycine bridge, using glycyl-tRNA(Gly) as donor. This is Aminoacyltransferase FemB (femB) from Staphylococcus aureus (strain bovine RF122 / ET3-1).